A 442-amino-acid chain; its full sequence is 4-alpha-glucanotransferase (442 aa).

5 residues coordinate Ca(2+): Asp13, Asn15, Asp17, Val19, and Asp21. Catalysis depends on Asp186, which acts as the Nucleophile. Glu216 acts as the Proton donor in catalysis.

This sequence belongs to the glycosyl hydrolase 13 family. As to quaternary structure, monomer. Requires Ca(2+) as cofactor.

The protein localises to the cytoplasm. The catalysed reaction is Transfers a segment of a (1-&gt;4)-alpha-D-glucan to a new position in an acceptor, which may be glucose or a (1-&gt;4)-alpha-D-glucan.. Functionally, hydrolyzes the 1,4-alpha-glycoside bonds in oligomeric and polymeric 1,4-alpha-glucans and transfers oligosaccharides (maltotriose being the shortest one) to acceptor maltodextrins. This is 4-alpha-glucanotransferase (mgtA) from Thermotoga neapolitana.